We begin with the raw amino-acid sequence, 147 residues long: Riboflavin kinase (147 aa).

15–20 (GLGEGR) serves as a coordination point for CDP. 2 residues coordinate Mg(2+): T44 and N46. 2 residues coordinate FMN: T97 and E104. 109-112 (TELR) is a CDP binding site.

This sequence belongs to the archaeal riboflavin kinase family. Requires Mg(2+) as cofactor.

It catalyses the reaction riboflavin + CTP = CDP + FMN + H(+). Its pathway is cofactor biosynthesis; FMN biosynthesis; FMN from riboflavin (CTP route): step 1/1. In terms of biological role, catalyzes the CTP-dependent phosphorylation of riboflavin (vitamin B2) to form flavin mononucleotide (FMN). The chain is Riboflavin kinase from Methanopyrus kandleri (strain AV19 / DSM 6324 / JCM 9639 / NBRC 100938).